The primary structure comprises 433 residues: Staphylopine synthase (433 aa).

NADP(+)-binding positions include 9–12, Arg-33, 37–40, and Asp-99; these read TGPV and SEKS. The active-site Proton donor/acceptor is the His-216.

Belongs to the staphylopine dehydrogenase family. In terms of assembly, homodimer.

The enzyme catalyses staphylopine + NADP(+) + H2O = (2S)-2-amino-4-{[(1R)-1-carboxy-2-(1H-imidazol-4-yl)ethyl]amino}butanoate + pyruvate + NADPH + H(+). Its function is as follows. Catalyzes the NADPH-dependent reductive condensation of pyruvate to the intermediate formed by the adjacently encoded enzyme CntL, namely (2S)-2-amino-4-{[(1R)-1-carboxy-2-(1H-imidazol-4-yl)ethyl]amino}butanoate, leading to the production of staphylopine. This is the last step in the biosynthesis of the metallophore staphylopine, which is involved in the acquisition of nickel, cobalt, zinc, copper, and iron, and thus enables bacterial growth inside the host, where metal access is limited. Therefore, this enzyme probably contributes to staphylococcal virulence. Can use neither NADH nor alpha-ketoglutarate in place of NADPH and pyruvate, respectively. This chain is Staphylopine synthase, found in Staphylococcus aureus (strain Mu50 / ATCC 700699).